The primary structure comprises 523 residues: Siroheme synthase (523 aa).

The precorrin-2 dehydrogenase /sirohydrochlorin ferrochelatase stretch occupies residues 1–203 (MNTFPLFFKL…GNENEAIAQL (203 aa)). NAD(+)-binding positions include 22–23 (DV) and 43–44 (PS). Phosphoserine is present on Ser-128. The uroporphyrinogen-III C-methyltransferase stretch occupies residues 231 to 523 (GEVYIVGAGP…DGGLEQLVID (293 aa)). Pro-240 is a binding site for S-adenosyl-L-methionine. Asp-263 serves as the catalytic Proton acceptor. Lys-285 (proton donor) is an active-site residue. S-adenosyl-L-methionine contacts are provided by residues 316–318 (GGD), Ile-321, 346–347 (TA), Met-398, and Ala-427.

It in the N-terminal section; belongs to the precorrin-2 dehydrogenase / sirohydrochlorin ferrochelatase family. In the C-terminal section; belongs to the precorrin methyltransferase family.

It catalyses the reaction uroporphyrinogen III + 2 S-adenosyl-L-methionine = precorrin-2 + 2 S-adenosyl-L-homocysteine + H(+). The enzyme catalyses precorrin-2 + NAD(+) = sirohydrochlorin + NADH + 2 H(+). It carries out the reaction siroheme + 2 H(+) = sirohydrochlorin + Fe(2+). It participates in cofactor biosynthesis; adenosylcobalamin biosynthesis; precorrin-2 from uroporphyrinogen III: step 1/1. Its pathway is cofactor biosynthesis; adenosylcobalamin biosynthesis; sirohydrochlorin from precorrin-2: step 1/1. It functions in the pathway porphyrin-containing compound metabolism; siroheme biosynthesis; precorrin-2 from uroporphyrinogen III: step 1/1. The protein operates within porphyrin-containing compound metabolism; siroheme biosynthesis; siroheme from sirohydrochlorin: step 1/1. It participates in porphyrin-containing compound metabolism; siroheme biosynthesis; sirohydrochlorin from precorrin-2: step 1/1. Functionally, multifunctional enzyme that catalyzes the SAM-dependent methylations of uroporphyrinogen III at position C-2 and C-7 to form precorrin-2 via precorrin-1. Then it catalyzes the NAD-dependent ring dehydrogenation of precorrin-2 to yield sirohydrochlorin. Finally, it catalyzes the ferrochelation of sirohydrochlorin to yield siroheme. This Psychrobacter cryohalolentis (strain ATCC BAA-1226 / DSM 17306 / VKM B-2378 / K5) protein is Siroheme synthase.